The chain runs to 267 residues: Glutamate racemase (267 aa).

Substrate is bound by residues 9–10 and 41–42; these read DS and YS. Cys-73 serves as the catalytic Proton donor/acceptor. Residue 74 to 75 participates in substrate binding; that stretch reads NT. Cys-184 acts as the Proton donor/acceptor in catalysis. 185–186 lines the substrate pocket; that stretch reads TH.

The protein belongs to the aspartate/glutamate racemases family.

The catalysed reaction is L-glutamate = D-glutamate. Its pathway is cell wall biogenesis; peptidoglycan biosynthesis. In terms of biological role, provides the (R)-glutamate required for cell wall biosynthesis. The polypeptide is Glutamate racemase (Glaesserella parasuis serovar 5 (strain SH0165) (Haemophilus parasuis)).